Consider the following 381-residue polypeptide: tRNA pseudouridine synthase D (381 aa).

Catalysis depends on aspartate 81, which acts as the Nucleophile. The TRUD domain occupies 160–335 (GMPNYFGSQR…TLGSRRFFWV (176 aa)).

It belongs to the pseudouridine synthase TruD family.

It carries out the reaction uridine(13) in tRNA = pseudouridine(13) in tRNA. Functionally, responsible for synthesis of pseudouridine from uracil-13 in transfer RNAs. This is tRNA pseudouridine synthase D from Helicobacter pylori (strain P12).